Here is an 860-residue protein sequence, read N- to C-terminus: Leucine--tRNA ligase (860 aa).

Positions 42–52 (PYPSGRLHMGH) match the 'HIGH' region motif. Positions 619–623 (KMSKS) match the 'KMSKS' region motif. Lysine 622 serves as a coordination point for ATP.

This sequence belongs to the class-I aminoacyl-tRNA synthetase family.

The protein localises to the cytoplasm. The catalysed reaction is tRNA(Leu) + L-leucine + ATP = L-leucyl-tRNA(Leu) + AMP + diphosphate. This is Leucine--tRNA ligase from Salmonella enteritidis PT4 (strain P125109).